A 238-amino-acid polypeptide reads, in one-letter code: Ureidoacrylate amidohydrolase RutB (238 aa).

The active-site Proton acceptor is Asp-35. Lys-144 is an active-site residue. The active-site Nucleophile is the Cys-177.

Belongs to the isochorismatase family. RutB subfamily.

The catalysed reaction is (Z)-3-ureidoacrylate + H2O + H(+) = (Z)-3-aminoacrylate + NH4(+) + CO2. It carries out the reaction (Z)-3-ureidoacrylate + H2O = (Z)-3-aminoacrylate + carbamate + H(+). The enzyme catalyses (Z)-2-methylureidoacrylate + H2O + H(+) = (Z)-2-methylaminoacrylate + NH4(+) + CO2. Hydrolyzes ureidoacrylate to form aminoacrylate and carbamate. The carbamate hydrolyzes spontaneously, thereby releasing one of the nitrogen atoms of the pyrimidine ring as ammonia and one of its carbon atoms as CO2. The sequence is that of Ureidoacrylate amidohydrolase RutB from Caulobacter vibrioides (strain NA1000 / CB15N) (Caulobacter crescentus).